Here is a 777-residue protein sequence, read N- to C-terminus: 1,4-alpha-glucan branching enzyme GlgB (777 aa).

The active-site Nucleophile is aspartate 408. Glutamate 461 functions as the Proton donor in the catalytic mechanism.

This sequence belongs to the glycosyl hydrolase 13 family. GlgB subfamily. Monomer.

It catalyses the reaction Transfers a segment of a (1-&gt;4)-alpha-D-glucan chain to a primary hydroxy group in a similar glucan chain.. It participates in glycan biosynthesis; glycogen biosynthesis. Catalyzes the formation of the alpha-1,6-glucosidic linkages in glycogen by scission of a 1,4-alpha-linked oligosaccharide from growing alpha-1,4-glucan chains and the subsequent attachment of the oligosaccharide to the alpha-1,6 position. In Actinobacillus pleuropneumoniae serotype 7 (strain AP76), this protein is 1,4-alpha-glucan branching enzyme GlgB.